The following is a 995-amino-acid chain: Putative pentatricopeptide repeat-containing protein At5g09950 (995 aa).

22 PPR repeats span residues 35–65, 66–100, 101–137, 138–169, 170–204, 205–241, 242–276, 278–303, 307–342, 348–378, 379–413, 414–448, 449–483, 484–515, 516–550, 551–581, 583–617, 618–652, 653–683, 684–718, 720–750, and 756–786; these read DVYL…MPLR, NCVS…GIFS, NQYA…SYAV, DAVV…IEVK, NSVS…GSRP, TEYT…GLLT, DLFV…NAVT, NGLM…MNSM, SPES…VITT, MVGI…MTDK, DSVS…DILP, GSFT…GIDL, NVSV…DQVS, WNSI…GQKL, NRIT…NIAD, EATT…MAER, DNVT…GQRL, DSFM…CLES, DVVV…MPVR, NSYS…GQTP, DHVT…MSDS, and RIEH…MPMK. The type E motif stretch occupies residues 791-868; the sequence is IWRTVLGACC…EAGYSWVTMK (78 aa). The tract at residues 869–899 is type E(+) motif; it reads DGVHMFVAGDKSHPDADVIYKKLKELNRKMR. The segment at 900-995 is type DYW motif; it reads DAGYVPQTGF…DGACSCSDFW (96 aa).

Belongs to the PPR family. PCMP-H subfamily.

This Arabidopsis thaliana (Mouse-ear cress) protein is Putative pentatricopeptide repeat-containing protein At5g09950 (PCMP-H35).